A 326-amino-acid polypeptide reads, in one-letter code: tRNA-modifying protein YgfZ (326 aa).

The folate site is built by Trp-27 and Trp-189.

This sequence belongs to the tRNA-modifying YgfZ family.

The protein resides in the cytoplasm. Its function is as follows. Folate-binding protein involved in regulating the level of ATP-DnaA and in the modification of some tRNAs. It is probably a key factor in regulatory networks that act via tRNA modification, such as initiation of chromosomal replication. This chain is tRNA-modifying protein YgfZ, found in Escherichia coli O45:K1 (strain S88 / ExPEC).